Here is a 249-residue protein sequence, read N- to C-terminus: Probable amino-acid import ATP-binding protein YxeO (249 aa).

The ABC transporter domain maps to 2-239 (ITVKNIRKAF…PKNERTKRFI (238 aa)). 34-41 (GPSGSGKS) lines the ATP pocket.

The protein belongs to the ABC transporter superfamily. In terms of assembly, the complex is composed of two ATP-binding proteins (YxeO), two transmembrane proteins (YxeN) and a solute-binding protein (YxeM).

The protein resides in the cell membrane. Its function is as follows. Probably part of the ABC transporter complex YxeMNO that could be involved in amino-acid import. May transport S-methylcysteine. Responsible for energy coupling to the transport system. The protein is Probable amino-acid import ATP-binding protein YxeO (yxeO) of Bacillus subtilis (strain 168).